Here is a 445-residue protein sequence, read N- to C-terminus: Phosphoglucosamine mutase (445 aa).

Ser-101 acts as the Phosphoserine intermediate in catalysis. The Mg(2+) site is built by Ser-101, Asp-240, Asp-242, and Asp-244. At Ser-101 the chain carries Phosphoserine.

Belongs to the phosphohexose mutase family. Requires Mg(2+) as cofactor. In terms of processing, activated by phosphorylation.

It carries out the reaction alpha-D-glucosamine 1-phosphate = D-glucosamine 6-phosphate. Catalyzes the conversion of glucosamine-6-phosphate to glucosamine-1-phosphate. This chain is Phosphoglucosamine mutase, found in Pseudomonas paraeruginosa (strain DSM 24068 / PA7) (Pseudomonas aeruginosa (strain PA7)).